The primary structure comprises 431 residues: Glucose-6-phosphate isomerase (431 aa).

The active-site Proton donor is the Glu284. Residues His305 and Lys420 contribute to the active site.

Belongs to the GPI family.

It localises to the cytoplasm. The enzyme catalyses alpha-D-glucose 6-phosphate = beta-D-fructose 6-phosphate. Its pathway is carbohydrate biosynthesis; gluconeogenesis. It participates in carbohydrate degradation; glycolysis; D-glyceraldehyde 3-phosphate and glycerone phosphate from D-glucose: step 2/4. Catalyzes the reversible isomerization of glucose-6-phosphate to fructose-6-phosphate. This Mycoplasma genitalium (strain ATCC 33530 / DSM 19775 / NCTC 10195 / G37) (Mycoplasmoides genitalium) protein is Glucose-6-phosphate isomerase.